A 209-amino-acid chain; its full sequence is Ribosomal RNA large subunit methyltransferase E (209 aa).

S-adenosyl-L-methionine-binding residues include Gly-63, Trp-65, Asp-83, Asp-99, and Asp-124. The active-site Proton acceptor is Lys-164.

This sequence belongs to the class I-like SAM-binding methyltransferase superfamily. RNA methyltransferase RlmE family.

The protein localises to the cytoplasm. The enzyme catalyses uridine(2552) in 23S rRNA + S-adenosyl-L-methionine = 2'-O-methyluridine(2552) in 23S rRNA + S-adenosyl-L-homocysteine + H(+). In terms of biological role, specifically methylates the uridine in position 2552 of 23S rRNA at the 2'-O position of the ribose in the fully assembled 50S ribosomal subunit. The protein is Ribosomal RNA large subunit methyltransferase E of Yersinia enterocolitica serotype O:8 / biotype 1B (strain NCTC 13174 / 8081).